A 572-amino-acid polypeptide reads, in one-letter code: Urease subunit alpha (572 aa).

The 439-residue stretch at 134 to 572 folds into the Urease domain; that stretch reads AGIDTHIHLI…AAMNQLYFFG (439 aa). Ni(2+) is bound by residues H139, H141, and K222. At K222 the chain carries N6-carboxylysine. H224 is a substrate binding site. Ni(2+) contacts are provided by H251 and H277. H325 acts as the Proton donor in catalysis. D365 is a binding site for Ni(2+).

Belongs to the metallo-dependent hydrolases superfamily. Urease alpha subunit family. As to quaternary structure, heterotrimer of UreA (gamma), UreB (beta) and UreC (alpha) subunits. Three heterotrimers associate to form the active enzyme. Ni cation serves as cofactor. In terms of processing, carboxylation allows a single lysine to coordinate two nickel ions.

Its subcellular location is the cytoplasm. It catalyses the reaction urea + 2 H2O + H(+) = hydrogencarbonate + 2 NH4(+). It functions in the pathway nitrogen metabolism; urea degradation; CO(2) and NH(3) from urea (urease route): step 1/1. The sequence is that of Urease subunit alpha from Edwardsiella ictaluri (strain 93-146).